Consider the following 295-residue polypeptide: Ankyrin repeat and SOCS box protein 17 (295 aa).

An ANK repeat occupies 146–176; the sequence is SGITPLLYVAQTRQSNILKILLQYGILEREK. The SOCS box domain occupies 243–295; sequence DYIPPTRYKDPCELVHLCRITIRTQLLANNMLPNGIFSLLIPTRLQNFLNLES.

The protein belongs to the ankyrin SOCS box (ASB) family. Specifically expressed in testis. Localizes to spermatogenic cells in testis, with highest expression in round spermatids and condensing spermatids and lower expression in pachytene spermatocytes.

It functions in the pathway protein modification; protein ubiquitination. Its function is as follows. May be a substrate-recognition component of a SCF-like ECS (Elongin-Cullin-SOCS-box protein) E3 ubiquitin-protein ligase complex which mediates the ubiquitination and subsequent proteasomal degradation of target proteins. In Mus musculus (Mouse), this protein is Ankyrin repeat and SOCS box protein 17 (Asb17).